Here is a 282-residue protein sequence, read N- to C-terminus: MPVSRFAVFGHPIAHSLSPRIHTEFGRQMGVALDYLAFDVAPDAFRVSLEHFVAEGGYGANVTLPLKEAAFEVCTTLSARARRAGAVNTLSRVDGVWHGENTDGIGLVRNLTERHGLDLRGRRALLLGAGGAARGVAPALLDAGITEMVIVNRSPERADMLCDALGEPGRVSARYWGDLGDLGNFELIVNATSIGNTSDMRTFSLPRSLLDSMTVAVDLNYGSAAVPFLAWAHAVETRYAIDGLGMLVEQAAESFSLWHGRRPDTDPVYTVLHSEYGVPGRS.

Shikimate is bound by residues 16–18 and Thr-63; that span reads SLS. Catalysis depends on Lys-67, which acts as the Proton acceptor. Shikimate contacts are provided by Asn-88 and Asp-103. NADP(+)-binding positions include 128–132 and Leu-219; that span reads GAGGA. Tyr-221 is a binding site for shikimate. Residue Gly-243 coordinates NADP(+).

Belongs to the shikimate dehydrogenase family. As to quaternary structure, homodimer.

It carries out the reaction shikimate + NADP(+) = 3-dehydroshikimate + NADPH + H(+). It functions in the pathway metabolic intermediate biosynthesis; chorismate biosynthesis; chorismate from D-erythrose 4-phosphate and phosphoenolpyruvate: step 4/7. Involved in the biosynthesis of the chorismate, which leads to the biosynthesis of aromatic amino acids. Catalyzes the reversible NADPH linked reduction of 3-dehydroshikimate (DHSA) to yield shikimate (SA). The polypeptide is Shikimate dehydrogenase (NADP(+)) (Xylella fastidiosa (strain M12)).